We begin with the raw amino-acid sequence, 160 residues long: Cyclic pyranopterin monophosphate synthase (160 aa).

Substrate contacts are provided by residues 74–76 (LSH) and 112–113 (ME). Asp-127 is an active-site residue.

The protein belongs to the MoaC family. As to quaternary structure, homohexamer; trimer of dimers.

The enzyme catalyses (8S)-3',8-cyclo-7,8-dihydroguanosine 5'-triphosphate = cyclic pyranopterin phosphate + diphosphate. The protein operates within cofactor biosynthesis; molybdopterin biosynthesis. Catalyzes the conversion of (8S)-3',8-cyclo-7,8-dihydroguanosine 5'-triphosphate to cyclic pyranopterin monophosphate (cPMP). This chain is Cyclic pyranopterin monophosphate synthase, found in Geobacter sulfurreducens (strain ATCC 51573 / DSM 12127 / PCA).